An 89-amino-acid polypeptide reads, in one-letter code: Putative membrane protein insertion efficiency factor (89 aa).

The tract at residues 69 to 89 (DPVPPAHTERGGTMCPSRLPE) is disordered.

The protein belongs to the UPF0161 family.

Its subcellular location is the cell inner membrane. Its function is as follows. Could be involved in insertion of integral membrane proteins into the membrane. The polypeptide is Putative membrane protein insertion efficiency factor (Paramagnetospirillum magneticum (strain ATCC 700264 / AMB-1) (Magnetospirillum magneticum)).